We begin with the raw amino-acid sequence, 205 residues long: SREBP regulating gene protein (205 aa).

The Cytoplasmic portion of the chain corresponds to 1–16; it reads MVPCGAVLWRRLLRKR. A helical transmembrane segment spans residues 17–35; the sequence is WVLGVVFGLSLVYFLSSTF. Topologically, residues 36-205 are lumenal; it reads KQEERTVRDR…GEYPPELLPV (170 aa). An N-linked (GlcNAc...) asparagine glycan is attached at N67.

The protein belongs to the SPRING family.

Its subcellular location is the golgi apparatus membrane. Functionally, positively regulates hepatic SREBP signaling pathway by modulating the proper localization of SCAP (SREBP cleavage-activating protein) to the endoplasmic reticulum, thereby controlling the level of functional SCAP. This Gallus gallus (Chicken) protein is SREBP regulating gene protein.